We begin with the raw amino-acid sequence, 426 residues long: Serine--tRNA ligase (426 aa).

Position 233–235 (233–235 (TAE)) interacts with L-serine. 264–266 (RRE) lines the ATP pocket. Residue Glu287 participates in L-serine binding. 351 to 354 (EISS) lines the ATP pocket. Ser386 serves as a coordination point for L-serine.

This sequence belongs to the class-II aminoacyl-tRNA synthetase family. Type-1 seryl-tRNA synthetase subfamily. As to quaternary structure, homodimer. The tRNA molecule binds across the dimer.

It is found in the cytoplasm. The catalysed reaction is tRNA(Ser) + L-serine + ATP = L-seryl-tRNA(Ser) + AMP + diphosphate + H(+). It carries out the reaction tRNA(Sec) + L-serine + ATP = L-seryl-tRNA(Sec) + AMP + diphosphate + H(+). It functions in the pathway aminoacyl-tRNA biosynthesis; selenocysteinyl-tRNA(Sec) biosynthesis; L-seryl-tRNA(Sec) from L-serine and tRNA(Sec): step 1/1. In terms of biological role, catalyzes the attachment of serine to tRNA(Ser). Is also able to aminoacylate tRNA(Sec) with serine, to form the misacylated tRNA L-seryl-tRNA(Sec), which will be further converted into selenocysteinyl-tRNA(Sec). The polypeptide is Serine--tRNA ligase (Prochlorococcus marinus (strain NATL1A)).